The chain runs to 1091 residues: ATP-citrate synthase (1091 aa).

The 262-residue stretch at 4-265 (KAISEQTGKE…LDAKSGASLK (262 aa)) folds into the ATP-grasp domain. The ATP site is built by lysine 58, arginine 66, glycine 67, proline 109, valine 111, and glutamate 118. Tyrosine 131 bears the Phosphotyrosine mark. An ATP-binding site is contributed by aspartate 216. Mg(2+)-binding residues include aspartate 257, serine 260, and alanine 262. Phosphoserine is present on serine 263. Positions 309, 346, 348, 364, and 379 each coordinate citrate. A compositionally biased stretch (low complexity) spans 442–457 (SGSTSTPAPSRTASFS). A disordered region spans residues 442 to 478 (SGSTSTPAPSRTASFSESRADEVAPAKKAKPAMPQGK). Threonine 447 carries the phosphothreonine modification. Position 451 is a phosphoserine (serine 451). Residue serine 455 is modified to Phosphoserine; by PKA and PKB/AKT1 or PKB/AKT2 or BCKDK. The residue at position 459 (serine 459) is a Phosphoserine. 3 positions are modified to N6-acetyllysine; alternate: lysine 530, lysine 536, and lysine 544. Residues lysine 530, lysine 536, and lysine 544 each participate in a glycyl lysine isopeptide (Lys-Gly) (interchain with G-Cter in ubiquitin); alternate cross-link. Threonine 629 carries the phosphothreonine modification. Serine 653 is subject to Phosphoserine. Position 672 is a phosphotyrosine (tyrosine 672). Histidine 750 acts as the Tele-phosphohistidine intermediate in catalysis. Position 769 to 779 (769 to 779 (LKEAGVFVPRS)) interacts with CoA. Serine 829 carries the post-translational modification Phosphoserine. Residues lysine 938, lysine 958, lysine 968, and lysine 1067 each carry the N6-acetyllysine modification. Serine 1090 bears the Phosphoserine mark.

This sequence in the N-terminal section; belongs to the succinate/malate CoA ligase beta subunit family. It in the C-terminal section; belongs to the succinate/malate CoA ligase alpha subunit family. As to quaternary structure, homotetramer. Mg(2+) serves as cofactor. Phosphorylated by PKA and GSK3 in a sequential manner; phosphorylation results in activation of its activity. Phosphorylation on Thr-447 and Ser-451 depends on the phosphorylation state of Ser-455. Phosphorylation on Ser-455 is decreased by prior phosphorylation on the other 2 residues. Phosphorylated at Ser-455 by BCKDK and dephosphorylated by protein phosphatase PPM1K. Post-translationally, ISGylated. In terms of processing, acetylated at Lys-530, Lys-536 and Lys-544 by KAT2B/PCAF. Acetylation is promoted by glucose and stabilizes the protein, probably by preventing ubiquitination at the same sites. Acetylation promotes de novo lipid synthesis. Deacetylated by SIRT2. Ubiquitinated at Lys-530, Lys-536 and Lys-544 by the BCR(KLHL25) E3 ubiquitin ligase complex and UBR4, leading to its degradation. Ubiquitination is probably inhibited by acetylation at same site. BCR(KLHL25)-mediated degradation of ACLY promotes fatty acid oxidation and is required for differentiation of inducible regulatory T (iTreg) cells.

The protein resides in the cytoplasm. It localises to the cytosol. It carries out the reaction oxaloacetate + acetyl-CoA + ADP + phosphate = citrate + ATP + CoA. With respect to regulation, phosphorylation results in activation of its activity. Glucose 6-phosphate, fructose 6-phosphate, fructose 2,6-bisphosphate, ribulose 5-phosphate, and fructose 1,6-bisphosphate also act as activators. In terms of biological role, catalyzes the cleavage of citrate into oxaloacetate and acetyl-CoA, the latter serving as common substrate in multiple biochemical reactions in protein, carbohydrate and lipid metabolism. The polypeptide is ATP-citrate synthase (Acly) (Mus musculus (Mouse)).